We begin with the raw amino-acid sequence, 273 residues long: 4-hydroxy-tetrahydrodipicolinate reductase (273 aa).

Residues 11–16 and glutamate 36 each bind NAD(+); that span reads GAGGRM. Arginine 37 provides a ligand contact to NADP(+). Residues 100-102 and 124-127 each bind NAD(+); these read GTT and AANY. Residue histidine 157 is the Proton donor/acceptor of the active site. (S)-2,3,4,5-tetrahydrodipicolinate is bound at residue histidine 158. Catalysis depends on lysine 161, which acts as the Proton donor. 167–168 lines the (S)-2,3,4,5-tetrahydrodipicolinate pocket; that stretch reads GT.

It belongs to the DapB family.

The protein localises to the cytoplasm. The catalysed reaction is (S)-2,3,4,5-tetrahydrodipicolinate + NAD(+) + H2O = (2S,4S)-4-hydroxy-2,3,4,5-tetrahydrodipicolinate + NADH + H(+). It carries out the reaction (S)-2,3,4,5-tetrahydrodipicolinate + NADP(+) + H2O = (2S,4S)-4-hydroxy-2,3,4,5-tetrahydrodipicolinate + NADPH + H(+). Its pathway is amino-acid biosynthesis; L-lysine biosynthesis via DAP pathway; (S)-tetrahydrodipicolinate from L-aspartate: step 4/4. Functionally, catalyzes the conversion of 4-hydroxy-tetrahydrodipicolinate (HTPA) to tetrahydrodipicolinate. The polypeptide is 4-hydroxy-tetrahydrodipicolinate reductase (Acinetobacter baumannii (strain ACICU)).